The chain runs to 303 residues: Mycothiol acetyltransferase (303 aa).

N-acetyltransferase domains are found at residues 10–156 and 162–303; these read ALPG…LAVP and LAVR…SGPR. Glutamate 41 lines the 1D-myo-inositol 2-(L-cysteinylamino)-2-deoxy-alpha-D-glucopyranoside pocket. 86–88 provides a ligand contact to acetyl-CoA; the sequence is LLV. Residues glutamate 189, lysine 228, and glutamate 235 each contribute to the 1D-myo-inositol 2-(L-cysteinylamino)-2-deoxy-alpha-D-glucopyranoside site. Acetyl-CoA is bound by residues 239–241 and 246–252; these read LGV and SGAGLGR. Tyrosine 272 contributes to the 1D-myo-inositol 2-(L-cysteinylamino)-2-deoxy-alpha-D-glucopyranoside binding site. Acetyl-CoA is bound at residue 277–282; that stretch reads NLRAVR.

This sequence belongs to the acetyltransferase family. MshD subfamily. In terms of assembly, monomer.

The enzyme catalyses 1D-myo-inositol 2-(L-cysteinylamino)-2-deoxy-alpha-D-glucopyranoside + acetyl-CoA = mycothiol + CoA + H(+). Its function is as follows. Catalyzes the transfer of acetyl from acetyl-CoA to desacetylmycothiol (Cys-GlcN-Ins) to form mycothiol. The protein is Mycothiol acetyltransferase of Kineococcus radiotolerans (strain ATCC BAA-149 / DSM 14245 / SRS30216).